Consider the following 410-residue polypeptide: Peptidase T (410 aa).

Histidine 79 contributes to the Zn(2+) binding site. Aspartate 81 is an active-site residue. Aspartate 142 contacts Zn(2+). The active-site Proton acceptor is the glutamate 176. Positions 177, 199, and 381 each coordinate Zn(2+).

It belongs to the peptidase M20B family. Zn(2+) is required as a cofactor.

Its subcellular location is the cytoplasm. It carries out the reaction Release of the N-terminal residue from a tripeptide.. Its function is as follows. Cleaves the N-terminal amino acid of tripeptides. The protein is Peptidase T of Bacillus anthracis (strain A0248).